Reading from the N-terminus, the 150-residue chain is uncharacterized protein (150 aa).

This is an uncharacterized protein from Escherichia coli O157:H7.